A 777-amino-acid chain; its full sequence is 1,4-alpha-glucan branching enzyme GlgB (777 aa).

Asp408 acts as the Nucleophile in catalysis. Glu461 (proton donor) is an active-site residue.

Belongs to the glycosyl hydrolase 13 family. GlgB subfamily. As to quaternary structure, monomer.

The catalysed reaction is Transfers a segment of a (1-&gt;4)-alpha-D-glucan chain to a primary hydroxy group in a similar glucan chain.. It participates in glycan biosynthesis; glycogen biosynthesis. Functionally, catalyzes the formation of the alpha-1,6-glucosidic linkages in glycogen by scission of a 1,4-alpha-linked oligosaccharide from growing alpha-1,4-glucan chains and the subsequent attachment of the oligosaccharide to the alpha-1,6 position. In Actinobacillus pleuropneumoniae serotype 3 (strain JL03), this protein is 1,4-alpha-glucan branching enzyme GlgB.